A 143-amino-acid polypeptide reads, in one-letter code: Flagellar assembly factor FliW (143 aa).

It belongs to the FliW family. As to quaternary structure, interacts with translational regulator CsrA and flagellin(s).

It localises to the cytoplasm. Its function is as follows. Acts as an anti-CsrA protein, binds CsrA and prevents it from repressing translation of its target genes, one of which is flagellin. Binds to flagellin and participates in the assembly of the flagellum. The sequence is that of Flagellar assembly factor FliW from Clostridium botulinum (strain Okra / Type B1).